We begin with the raw amino-acid sequence, 196 residues long: UMP-CMP kinase (196 aa).

13 to 18 (GAGKGT) contributes to the ATP binding site. Position 33 is a phosphoserine (serine 33). Residues 33–63 (SAGELLRDERKNPDSQYGELIEKYIKDGKIV) are NMP. Arginine 39 is an a ribonucleoside 5'-phosphate binding site. Lysine 43 and lysine 55 each carry N6-acetyllysine. A ribonucleoside 5'-phosphate contacts are provided by residues 61-63 (KIV) and 93-96 (GFPR). Position 100 (asparagine 100) interacts with CMP. At lysine 106 the chain carries N6-succinyllysine. The tract at residues 133–143 (ERGKSSGRSDD) is LID. Position 134 (arginine 134) interacts with ATP. The a ribonucleoside 5'-phosphate site is built by arginine 140 and arginine 151. Lysine 179 serves as a coordination point for ATP. Serine 180 is modified (phosphoserine).

It belongs to the adenylate kinase family. UMP-CMP kinase subfamily. As to quaternary structure, monomer. Mg(2+) serves as cofactor.

It is found in the nucleus. Its subcellular location is the cytoplasm. It carries out the reaction CMP + ATP = CDP + ADP. The enzyme catalyses dCMP + ATP = dCDP + ADP. It catalyses the reaction UMP + ATP = UDP + ADP. The catalysed reaction is a 2'-deoxyribonucleoside 5'-diphosphate + ATP = a 2'-deoxyribonucleoside 5'-triphosphate + ADP. It carries out the reaction a ribonucleoside 5'-diphosphate + ATP = a ribonucleoside 5'-triphosphate + ADP. In terms of biological role, catalyzes the phosphorylation of pyrimidine nucleoside monophosphates at the expense of ATP. Plays an important role in de novo pyrimidine nucleotide biosynthesis. Has preference for UMP and CMP as phosphate acceptors. Also displays broad nucleoside diphosphate kinase activity. This Bos taurus (Bovine) protein is UMP-CMP kinase.